A 256-amino-acid polypeptide reads, in one-letter code: 3-dehydroquinate dehydratase (256 aa).

3-dehydroquinate is bound by residues 46–48 and R82; that span reads EWR. The active-site Proton donor/acceptor is the H144. K171 serves as the catalytic Schiff-base intermediate with substrate. Residues R213, S232, and Q236 each contribute to the 3-dehydroquinate site.

The protein belongs to the type-I 3-dehydroquinase family. As to quaternary structure, homodimer.

It catalyses the reaction 3-dehydroquinate = 3-dehydroshikimate + H2O. It functions in the pathway metabolic intermediate biosynthesis; chorismate biosynthesis; chorismate from D-erythrose 4-phosphate and phosphoenolpyruvate: step 3/7. Involved in the third step of the chorismate pathway, which leads to the biosynthesis of aromatic amino acids. Catalyzes the cis-dehydration of 3-dehydroquinate (DHQ) and introduces the first double bond of the aromatic ring to yield 3-dehydroshikimate. This chain is 3-dehydroquinate dehydratase, found in Shouchella clausii (strain KSM-K16) (Alkalihalobacillus clausii).